We begin with the raw amino-acid sequence, 578 residues long: Probable arginine--tRNA ligase, mitochondrial (578 aa).

A mitochondrion-targeting transit peptide spans 1-16; sequence MACGFRRAIACQLSRV. L-arginine-binding positions include 133–135, His144, Tyr322, Asp326, and Gln350; that span reads SPN. Positions 133–144 match the 'HIGH' region motif; that stretch reads SPNVAKKFHVGH. N6-acetyllysine is present on Lys568.

The protein belongs to the class-I aminoacyl-tRNA synthetase family.

It is found in the mitochondrion membrane. It carries out the reaction tRNA(Arg) + L-arginine + ATP = L-arginyl-tRNA(Arg) + AMP + diphosphate. Its function is as follows. Catalyzes the attachment of arginine to tRNA(Arg) in a two-step reaction: arginine is first activated by ATP to form Arg-AMP and then transferred to the acceptor end of tRNA(Arg). The chain is Probable arginine--tRNA ligase, mitochondrial (RARS2) from Homo sapiens (Human).